The primary structure comprises 212 residues: MKQAKFIVIEGLEGAGKSTAIQTVLDTLRQAGINEIAQTREPGGTPLAEKMRALVKEEHPGEHLHDMTELLLLYAARVQLVENVIKPALHEGKWVVGDRHDLSSQAYQGGGRQIDATLMKNLRDTALGEFKPAFTLYMDIDPKVGLERARGRGELDRIEKMDISFFERTRQRYLELAKSDASIVTINAEQSIEQVANDIRSALNLWLEQLQD.

11–18 serves as a coordination point for ATP; it reads GLEGAGKS.

Belongs to the thymidylate kinase family.

The enzyme catalyses dTMP + ATP = dTDP + ADP. Functionally, phosphorylation of dTMP to form dTDP in both de novo and salvage pathways of dTTP synthesis. The sequence is that of Thymidylate kinase from Vibrio vulnificus (strain CMCP6).